The chain runs to 77 residues: Conotoxin Vc6c (77 aa).

An N-terminal signal peptide occupies residues Met-1–Ala-22. The propeptide occupies Asp-23–Arg-51. Intrachain disulfides connect Cys-52/Cys-67, Cys-59/Cys-71, and Cys-66/Cys-76.

In terms of tissue distribution, expressed by the venom duct.

Its subcellular location is the secreted. This chain is Conotoxin Vc6c, found in Conus victoriae (Queen Victoria cone).